The sequence spans 218 residues: Glutathione S-transferase (218 aa).

The GST N-terminal domain maps to 3-88 (SKPVLGYWDI…YIGRKYKLTG (86 aa)). Residues 9-10 (YW), 43-46 (RSAW), lysine 50, 59-60 (NL), and 72-73 (QT) each bind glutathione. Residues 90 to 206 (NEPEELRVSL…YIKAQQPKLF (117 aa)) form the GST C-terminal domain. Substrate is bound at residue tyrosine 116.

Belongs to the GST superfamily. Mu family.

It carries out the reaction RX + glutathione = an S-substituted glutathione + a halide anion + H(+). Conjugation of reduced glutathione to a wide number of exogenous and endogenous hydrophobic electrophiles. The sequence is that of Glutathione S-transferase from Tyrophagus putrescentiae (Mold mite).